A 547-amino-acid polypeptide reads, in one-letter code: Putative nitric oxide synthase (547 aa).

A compositionally biased stretch (low complexity) spans 24-40 (QLAPNPSSFSPTRAAST). Disordered stretches follow at residues 24–57 (QLAPNPSSFSPTRAASTAPPPPEGAGPAAPSRGD) and 72–91 (VLAPEDAERRRRRREKRKAL). The span at 81–91 (RRRRREKRKAL) shows a compositional bias: basic residues. Residues 167–343 (ADQLRDKLSY…LYDTPGVHLH (177 aa)) form the CP-type G domain.

Belongs to the TRAFAC class YlqF/YawG GTPase family. NOA1 subfamily.

It carries out the reaction 2 L-arginine + 3 NADPH + 4 O2 + H(+) = 2 L-citrulline + 2 nitric oxide + 3 NADP(+) + 4 H2O. In terms of biological role, produces nitric oxide (NO) which is a messenger molecule involved in hormonal signaling and defense responses in plant. In Oryza sativa subsp. japonica (Rice), this protein is Putative nitric oxide synthase.